Here is a 263-residue protein sequence, read N- to C-terminus: Ribonuclease 3 (263 aa).

Residues 1-23 (MPHSKNQRKHRHHSHSERRRQPK) are disordered. The RNase III domain maps to 35-164 (FDELLRTLNL…FVGALYLDQG (130 aa)). Glu77 provides a ligand contact to Mg(2+). The active site involves Asp81. Residues Asp150 and Glu153 each coordinate Mg(2+). Glu153 is a catalytic residue. One can recognise a DRBM domain in the interval 190-259 (DFKSQLQEFI…AQQALITLSQ (70 aa)).

This sequence belongs to the ribonuclease III family. In terms of assembly, homodimer. Requires Mg(2+) as cofactor.

Its subcellular location is the cytoplasm. The enzyme catalyses Endonucleolytic cleavage to 5'-phosphomonoester.. Its function is as follows. Digests double-stranded RNA. Involved in the processing of primary rRNA transcript to yield the immediate precursors to the large and small rRNAs (23S and 16S). Processes some mRNAs, and tRNAs when they are encoded in the rRNA operon. Processes pre-crRNA and tracrRNA of type II CRISPR loci if present in the organism. The sequence is that of Ribonuclease 3 from Halalkalibacterium halodurans (strain ATCC BAA-125 / DSM 18197 / FERM 7344 / JCM 9153 / C-125) (Bacillus halodurans).